The following is a 369-amino-acid chain: MAAPRDAEIHKDVQNYYGNVLKTSADLQTNACVTPAKGVPEYIRKSLQNVHEEVISRYYGCGLVVPEHLENCRILDLGSGSGRDCYVLSQLVGQKGHITGIDMTKVQVEVAKAYLEYHTEKFGFQTPNVTFLHGQIEMLAEAGIQKESYDIVISNCVINLVPDKQKVLREVYQVLKYGGELYFSDVYASLEVSEDIKSHKVLWGECLGGALYWKDLAVIAKKIGFCPPRLVTANIITVGNKELERVLGDCRFVSATFRLFKLPKTEPAGRCQVVYNGGIMGHEKELIFDANFTFKEGEAVEVDEETAAILRNSRFAHDFLFTPVEASLLAPQTKVIIRDPFKLAEESDKMKPRCAPEGTGGCCGKRKSC.

The residue at position 46 (S46) is a Phosphoserine.

The protein belongs to the methyltransferase superfamily. Arsenite methyltransferase family.

It localises to the cytoplasm. The protein resides in the cytosol. It carries out the reaction arsenic triglutathione + [thioredoxin]-dithiol + S-adenosyl-L-methionine + 2 H2O = methylarsonous acid + [thioredoxin]-disulfide + 3 glutathione + S-adenosyl-L-homocysteine + H(+). The enzyme catalyses arsenic triglutathione + 2 [thioredoxin]-dithiol + 2 S-adenosyl-L-methionine + H2O = dimethylarsinous acid + 2 [thioredoxin]-disulfide + 3 glutathione + 2 S-adenosyl-L-homocysteine + 2 H(+). It catalyses the reaction arsenic triglutathione + 3 [thioredoxin]-dithiol + 3 S-adenosyl-L-methionine = trimethylarsine + 3 [thioredoxin]-disulfide + 3 glutathione + 3 S-adenosyl-L-homocysteine + 3 H(+). Functionally, catalyzes the transfer of a methyl group from AdoMet to trivalent arsenicals producing methylated and dimethylated arsenicals. It methylates arsenite to form methylarsonate, Me-AsO(3)H(2), which is reduced by methylarsonate reductase to methylarsonite, Me-As(OH)2. Methylarsonite is also a substrate and it is converted into the much less toxic compound dimethylarsinate (cacodylate), Me(2)As(O)-OH. The chain is Arsenite methyltransferase (As3mt) from Rattus norvegicus (Rat).